The sequence spans 419 residues: Transcription termination factor Rho (419 aa).

Residues 48 to 123 (DIFGDGVLEI…LKVNEVNYDK (76 aa)) enclose the Rho RNA-BD domain. RNA-binding regions lie at residues 61-66 (GFGFLR), 78-80 (DIY), and 108-110 (ERY). Residues 169 to 174 (GRGQRG), 181 to 186 (KAGKTM), and R212 contribute to the ATP site. Positions 284–288 (VLTGG) are RNA-binding 2.

This sequence belongs to the Rho family. In terms of assembly, homohexamer. The homohexamer assembles into an open ring structure.

Functionally, facilitates transcription termination by a mechanism that involves Rho binding to the nascent RNA, activation of Rho's RNA-dependent ATPase activity, and release of the mRNA from the DNA template. This is Transcription termination factor Rho from Salmonella typhi.